We begin with the raw amino-acid sequence, 149 residues long: 3-dehydroquinate dehydratase (149 aa).

The active-site Proton acceptor is the Tyr26. 3 residues coordinate substrate: Asn77, His83, and Asp90. The active-site Proton donor is His103. Substrate contacts are provided by residues 104–105 (LS) and Arg114.

Belongs to the type-II 3-dehydroquinase family. As to quaternary structure, homododecamer.

It carries out the reaction 3-dehydroquinate = 3-dehydroshikimate + H2O. The protein operates within metabolic intermediate biosynthesis; chorismate biosynthesis; chorismate from D-erythrose 4-phosphate and phosphoenolpyruvate: step 3/7. Catalyzes a trans-dehydration via an enolate intermediate. The sequence is that of 3-dehydroquinate dehydratase from Aliivibrio fischeri (strain MJ11) (Vibrio fischeri).